An 82-amino-acid chain; its full sequence is uncharacterized protein (82 aa).

The protein to M.thermoautotrophicum MTH386.

This is an uncharacterized protein from Methanocaldococcus jannaschii (strain ATCC 43067 / DSM 2661 / JAL-1 / JCM 10045 / NBRC 100440) (Methanococcus jannaschii).